Reading from the N-terminus, the 654-residue chain is Peptide-N(4)-(N-acetyl-beta-glucosaminyl)asparagine amidase (654 aa).

Ala2 bears the N-acetylalanine mark. The 62-residue stretch at 30-91 folds into the PUB domain; it reads EASKLLLTYA…EGETHLIFPK (62 aa). The segment covering 112 to 123 has biased composition (basic and acidic residues); the sequence is RLDGSNKSHKVE. A disordered region spans residues 112 to 167; sequence RLDGSNKSHKVESSQQPAASTQLPTTPSSNPSGLNQHTRNRQGQSPDPPSASTVTP. Positions 124–167 are enriched in polar residues; sequence SSQQPAASTQLPTTPSSNPSGLNQHTRNRQGQSPDPPSASTVTP. At Thr137 the chain carries Phosphothreonine. Positions 250, 253, 283, and 286 each coordinate Zn(2+). Cys309 (nucleophile) is an active-site residue. Catalysis depends on residues His336 and Asp353. Residues 454 to 654 enclose the PAW domain; it reads ELGGRISGSV…LEIIIKFSDL (201 aa).

The protein belongs to the transglutaminase-like superfamily. PNGase family. As to quaternary structure, component of a complex required to couple retrotranslocation, ubiquitination and deglycosylation composed of NGLY1, SAKS1, AMFR, VCP and RAD23B. Interacts with the proteasome components RAD23B and PSMC1. Interacts with directly with VCP. Interacts with DERL1, bringing it close to the endoplasmic reticulum membrane. Interacts with SAKS1. Zn(2+) serves as cofactor.

The protein resides in the cytoplasm. The enzyme catalyses Hydrolysis of an N(4)-(acetyl-beta-D-glucosaminyl)asparagine residue in which the glucosamine residue may be further glycosylated, to yield a (substituted) N-acetyl-beta-D-glucosaminylamine and a peptide containing an aspartate residue.. With respect to regulation, inhibited by Z-VAD-fmk, a well-known caspase inhibitor, which inhibits enzyme activity through covalent binding of the carbohydrate to the single Cys-306 residue. Its function is as follows. Specifically deglycosylates the denatured form of N-linked glycoproteins in the cytoplasm and assists their proteasome-mediated degradation. Cleaves the beta-aspartyl-glucosamine (GlcNAc) of the glycan and the amide side chain of Asn, converting Asn to Asp. Prefers proteins containing high-mannose over those bearing complex type oligosaccharides. Can recognize misfolded proteins in the endoplasmic reticulum that are exported to the cytosol to be destroyed and deglycosylate them, while it has no activity toward native proteins. Deglycosylation is a prerequisite for subsequent proteasome-mediated degradation of some, but not all, misfolded glycoproteins. This is Peptide-N(4)-(N-acetyl-beta-glucosaminyl)asparagine amidase (NGLY1) from Macaca fascicularis (Crab-eating macaque).